Consider the following 683-residue polypeptide: Methionine--tRNA ligase (683 aa).

Residues 15 to 25 (PYANGPIHLGH) carry the 'HIGH' region motif. Zn(2+) is bound by residues Cys146, Cys149, Cys159, and Cys162. Residues 332–336 (KMSKS) carry the 'KMSKS' region motif. Position 335 (Lys335) interacts with ATP. A tRNA-binding domain is found at 581–683 (DFFKVDLRVA…AGAKAGQRVK (103 aa)).

The protein belongs to the class-I aminoacyl-tRNA synthetase family. MetG type 1 subfamily. As to quaternary structure, homodimer. It depends on Zn(2+) as a cofactor.

Its subcellular location is the cytoplasm. It carries out the reaction tRNA(Met) + L-methionine + ATP = L-methionyl-tRNA(Met) + AMP + diphosphate. Is required not only for elongation of protein synthesis but also for the initiation of all mRNA translation through initiator tRNA(fMet) aminoacylation. This Histophilus somni (strain 129Pt) (Haemophilus somnus) protein is Methionine--tRNA ligase.